Reading from the N-terminus, the 141-residue chain is Nucleoside diphosphate kinase (141 aa).

Residues Lys-11, Phe-59, Arg-87, Thr-93, Arg-104, and Asn-114 each contribute to the ATP site. His-117 (pros-phosphohistidine intermediate) is an active-site residue.

This sequence belongs to the NDK family. As to quaternary structure, homotetramer. The cofactor is Mg(2+).

It is found in the cytoplasm. The catalysed reaction is a 2'-deoxyribonucleoside 5'-diphosphate + ATP = a 2'-deoxyribonucleoside 5'-triphosphate + ADP. The enzyme catalyses a ribonucleoside 5'-diphosphate + ATP = a ribonucleoside 5'-triphosphate + ADP. Functionally, major role in the synthesis of nucleoside triphosphates other than ATP. The ATP gamma phosphate is transferred to the NDP beta phosphate via a ping-pong mechanism, using a phosphorylated active-site intermediate. In Vibrio vulnificus (strain CMCP6), this protein is Nucleoside diphosphate kinase.